A 556-amino-acid polypeptide reads, in one-letter code: Transcription factor IIIB 70 kDa subunit (556 aa).

The TFIIB-type zinc-finger motif lies at serine 8–glutamate 41. Residues cysteine 12, cysteine 15, cysteine 33, and cysteine 36 each coordinate Zn(2+). 2 tandem repeats follow at residues leucine 98–lysine 174 and isoleucine 193–glutamate 272. The interaction with TBP and with the Pol III subunit C34 stretch occupies residues leucine 98–glutamate 272. Residues lysine 284–lysine 556 form an interaction with TBP region. Disordered regions lie at residues arginine 287–lysine 309 and alanine 477–alanine 501. Residues glutamate 295 to lysine 309 are compositionally biased toward basic and acidic residues. Residues leucine 486–asparagine 495 are compositionally biased toward basic residues.

The protein belongs to the TFIIB family. In terms of assembly, TFIIIB comprises the TATA-binding protein (TBP), the B-related factor (BRF) and a 70 kDa polypeptide.

The protein resides in the nucleus. Its function is as follows. General activator of RNA polymerase III transcription. Interacts with TBP. Binds to Pol III subunit C34 and to the TAU135 component of TFIIIC. This Kluyveromyces lactis (strain ATCC 8585 / CBS 2359 / DSM 70799 / NBRC 1267 / NRRL Y-1140 / WM37) (Yeast) protein is Transcription factor IIIB 70 kDa subunit (TDS4).